Consider the following 185-residue polypeptide: Transposon Tn3 resolvase (185 aa).

Positions 2-137 constitute a Resolvase/invertase-type recombinase catalytic domain; that stretch reads RIFGYARVST…EGRQEAKLKG (136 aa). The O-(5'-phospho-DNA)-serine intermediate role is filled by Ser10. Residues 161–180 constitute a DNA-binding region (H-T-H motif); that stretch reads ATEIAHQLSIARSTVYKILE.

Belongs to the site-specific recombinase resolvase family.

In terms of biological role, resolvase catalyzes the resolution (a site-specific recombination) of the cointegrated replicon to yield the final transposition products. The sequence is that of Transposon Tn3 resolvase (tnpR) from Escherichia coli.